The primary structure comprises 188 residues: Putative manganese efflux pump MntP (188 aa).

A run of 6 helical transmembrane segments spans residues 2 to 22, 39 to 59, 67 to 87, 107 to 127, 129 to 149, and 166 to 186; these read IMGNLELFLIAVGLSMDAFAV, LITGLFFGGFQALMPLIGFLL, ITAIDHWIAFILLSLIGLNMI, IILSLATSIDALAVGITFAFL, VDIVPAVSMIGVTTFLFSFLG, and LAGGVILILMGLKILLEHLGF.

Belongs to the MntP (TC 9.B.29) family.

It localises to the cell membrane. Probably functions as a manganese efflux pump. This is Putative manganese efflux pump MntP from Desulfitobacterium hafniense (strain Y51).